A 374-amino-acid polypeptide reads, in one-letter code: Putative clathrin assembly protein At1g33340 (374 aa).

The region spanning 30–163 (YNEKAFFDIE…GWIINQAGKL (134 aa)) is the ENTH domain.

It is found in the membrane. Its subcellular location is the clathrin-coated pit. It localises to the golgi apparatus. The protein localises to the cytoplasmic vesicle. The protein resides in the clathrin-coated vesicle. The chain is Putative clathrin assembly protein At1g33340 from Arabidopsis thaliana (Mouse-ear cress).